Reading from the N-terminus, the 368-residue chain is Repressor ROX1 (368 aa).

Residues 10–83 constitute a DNA-binding region (HMG box); it reads IPRPKNAFIL…EHERKYPEYK (74 aa). Disordered stretches follow at residues 100-121 and 242-273; these read IEQQ…QPQL and SSQT…SSVL. Positions 102 to 121 are enriched in low complexity; sequence QQQQQQQKEQQQQKQSQPQL.

The protein resides in the nucleus. Functionally, transcription factor that represses the expression of HEM13, COX5B, ANB1, CYC7 or AAC3 (hypoxic function). Binds to the DNA sequence 5'-RRRTAACAAGAG-3'. This chain is Repressor ROX1 (ROX1), found in Saccharomyces cerevisiae (strain ATCC 204508 / S288c) (Baker's yeast).